A 504-amino-acid polypeptide reads, in one-letter code: Cytochrome P450 2D10 (504 aa).

Residue Ser-249 is modified to Phosphoserine. Residue Cys-446 coordinates heme.

This sequence belongs to the cytochrome P450 family. The cofactor is heme.

The protein localises to the endoplasmic reticulum membrane. It is found in the microsome membrane. It carries out the reaction an organic molecule + reduced [NADPH--hemoprotein reductase] + O2 = an alcohol + oxidized [NADPH--hemoprotein reductase] + H2O + H(+). Its function is as follows. Cytochromes P450 are a group of heme-thiolate monooxygenases. In liver microsomes, this enzyme is involved in an NADPH-dependent electron transport pathway. It oxidizes a variety of structurally unrelated compounds, including steroids, fatty acids, and xenobiotics. The chain is Cytochrome P450 2D10 (Cyp2d10) from Mus musculus (Mouse).